A 60-amino-acid polypeptide reads, in one-letter code: Large ribosomal subunit protein bL32c (60 aa).

Belongs to the bacterial ribosomal protein bL32 family.

Its subcellular location is the plastid. The protein resides in the chloroplast. The chain is Large ribosomal subunit protein bL32c from Psilotum nudum (Whisk fern).